We begin with the raw amino-acid sequence, 513 residues long: Noroxomaritidine synthase (513 aa).

A helical transmembrane segment spans residues 14–34 (HYPEILIAIACFLIFSLLLSA). C458 contacts heme.

It belongs to the cytochrome P450 family. Heme is required as a cofactor.

It localises to the membrane. The enzyme catalyses 4'-O-methylnorbelladine + reduced [NADPH--hemoprotein reductase] + O2 = (10bS,4aR)-noroxomaritidine + oxidized [NADPH--hemoprotein reductase] + 2 H2O + H(+). It carries out the reaction 4'-O-methylnorbelladine + reduced [NADPH--hemoprotein reductase] + O2 = (10bR,4aS)-noroxomaritidine + oxidized [NADPH--hemoprotein reductase] + 2 H2O + H(+). Its pathway is alkaloid biosynthesis. Functionally, cytochrome P450 that catalyzes an intramolecular para-para' C-C phenol coupling of 4'-O-methylnorbelladine in alkaloids biosynthesis, including haemanthamine- and crinamine-type alkaloids, promising anticancer agents. Catalyzes the formation of (10bR,4aS)-noroxomaritidine and (10bS,4aR)-noroxomaritidine from 4'-O-methylnorbelladine. Also produces N-demethylnarwedine as a minor product. Involved in the biosynthesis of haemanthamine. Can also use 4'-O-methyl-N-methylnorbelladine, (S)- and (R)-coclaurine as substrates, but not 3'-O-methylnorbelladine, 3',4'-O-dimethylnorbelladine, norbelladine, haemanthamine, (10bS,4aR)- or (10bR,4aS)-noroxomaritidine, isovanillin or tyramine. The sequence is that of Noroxomaritidine synthase from Narcissus aff. pseudonarcissus MK-2014 (Daffodil).